A 124-amino-acid polypeptide reads, in one-letter code: Protein MT1307 (124 aa).

Positions methionine 1 to alanine 35 form a signal peptide, tat-type signal.

It to M.tuberculosis Rv1813c. Post-translationally, predicted to be exported by the Tat system. The position of the signal peptide cleavage has not been experimentally proven.

This chain is Protein MT1307, found in Mycobacterium tuberculosis (strain CDC 1551 / Oshkosh).